Consider the following 546-residue polypeptide: Carboxylic ester hydrolase FVEG_12634 (546 aa).

The interval 72-91 (FTDGTKICPQPPSSNTPDPS) is disordered. The active-site Acyl-ester intermediate is the Ser214.

The protein belongs to the type-B carboxylesterase/lipase family.

It catalyses the reaction a carboxylic ester + H2O = an alcohol + a carboxylate + H(+). Its function is as follows. Carboxylic ester hydrolase; part of the Fusarium detoxification of benzoxazolinone cluster 2 (FDB2) involved in the degradation of benzoxazolinones produced by the host plant. Maize, wheat, and rye produce the 2 benzoxazinone phytoanticipins 2,4-dihy-droxy-7-methoxy-1,4-benzoxazin-3-one (DIMBOA) and 2,4-dihydroxy-1,4-benzoxazin-3-one (DIBOA) that, due to their inherent instability once released, spontaneously degrade to the more stable corresponding benzoxazolinones, 6-methoxy-2-benzoxazolinone (MBOA) and 2-benzoxazolinone (BOA), respectively. The first step in the detoxification of benzoxazolinones involves the hydrolysis of the cyclic ester bond of benzoxazolinones by the FDB1 cluster gamma-lactamase MBL1 to aminophenols. MBL1 is able to convert BOA into 2-aminophenol (2-AP), as well as MBOA into 5-methoxy-2-aminophenol (2-AMP). The FDB2 cluster N-malonyltransferase FDB2/NAT1 then metabolizes aminophenols via N-malonylation to non-toxic malonamic acids. FDB2/NAT1 converts 2-AP into N-(2-hydroxyphenyl) malonamic acid (HPMA) and 2-AMP into N-(2-hydroxy-4-methoxyphenyl) malonamic acid (HMPMA). The duplicated dienlactone hydrolases DLH1 and DLH2 may provide redundant function for hydrolyzing the lactone moiety in the BOA molecule. The roles of the amidases an other enzymes encoded by the 2 FDB clusters have not been identified so far. This is Carboxylic ester hydrolase FVEG_12634 from Gibberella moniliformis (strain M3125 / FGSC 7600) (Maize ear and stalk rot fungus).